Reading from the N-terminus, the 394-residue chain is GTPase Obg (394 aa).

In terms of domain architecture, Obg spans 5–163 (SNFVDYVKIY…RMVIMQLKML (159 aa)). The tract at residues 26 to 45 (HFRREKYIPKGGPDGGDGGR) is disordered. Positions 164–330 (ADVGLVGFPN…LKDTLWKELS (167 aa)) constitute an OBG-type G domain. Residues 170–177 (GFPNAGKS), 195–199 (FTTLE), 217–220 (DIPG), 284–287 (TKCD), and 311–313 (SAV) contribute to the GTP site. Mg(2+) contacts are provided by Ser177 and Thr197.

The protein belongs to the TRAFAC class OBG-HflX-like GTPase superfamily. OBG GTPase family. Monomer. It depends on Mg(2+) as a cofactor.

It localises to the cytoplasm. In terms of biological role, an essential GTPase which binds GTP, GDP and possibly (p)ppGpp with moderate affinity, with high nucleotide exchange rates and a fairly low GTP hydrolysis rate. Plays a role in control of the cell cycle, stress response, ribosome biogenesis and in those bacteria that undergo differentiation, in morphogenesis control. The protein is GTPase Obg of Porphyromonas gingivalis (strain ATCC 33277 / DSM 20709 / CIP 103683 / JCM 12257 / NCTC 11834 / 2561).